Here is an 865-residue protein sequence, read N- to C-terminus: MPHVDLNPLKQRMQAARAAAVAQFRQHPRPDMLLTELRRIVDQALRELVKLCPLPAGATLAAVGSYGRGELYPHSDVDLLILLPQPPSAADARAVEALVAALWDLGLEPGHSVRTLEDCEREARGDITVETALLESRWLAGSRTLMKRLDSAMQARLDAAVFFQAKRVEMQQRHAHYQDTPYALEPNCKESPGGLRDLQVILWMARAAGFGHSWREVAQAGLLTSSEARDLRRAEQAFKRLRIELHLLTGRREDRVLFDLQPGLAAVYGIASTATRRASELLMQRYYWAARLVTQLNVILVQNIEERLFPRPDSDARLIDDDFRNLRERLDIVREDGFERNPTLLLRAFLVMQQHPELIGMSARTLRAIWHSRHRIDAQFRRNPVNRKLFLQILQQPRGIVHELRRMTMLNILPRYLPVFRRIVGQMQHDLFHVYTVDQHTLAVVRNLRRFTMPEHAQEYPLASQLIAGLDRHWLLYVAALFHDIAKGRGGDHSELGAREVRRFAQDHGLDPTDAELVEFLVRHHLLMSAVAQKRDLSDPQVVRDFAAQVGDERRLAALYLLTVADIRGTSPRVWNAWKGKLLEDLFRLTLAALGGAHADAHTVLTERKDEAARLTRLAGLRDDAREAFWNQLDIAYFLRHDASEIAWHTRHLYYQVAPDEPVVRVRPTEHGEGLQVMVYTRDAPDLFVTTCGYFDAKSLSVQDARVHTTRHGWALDSFIVLAPEGFADLRAQATLVEHELAERLRDPHAARHAHAPRRLPHSHARRSRVFPVMPQAELSPDERSQSWRLSVTATDRPGLLYALARVFAEHGVDLIMAKIMTLGERVEDVFIVSGSALERPRSQMQFERAILDALAGDEPRQQAA.

A uridylyltransferase region spans residues 1–318 (MPHVDLNPLK…FPRPDSDARL (318 aa)). The uridylyl-removing stretch occupies residues 319-675 (IDDDFRNLRE…VRPTEHGEGL (357 aa)). The HD domain occupies 437-559 (VDQHTLAVVR…VGDERRLAAL (123 aa)). 2 consecutive ACT domains span residues 676 to 762 (QVMV…RLPH) and 789 to 865 (RLSV…QQAA). The segment at 747–767 (DPHAARHAHAPRRLPHSHARR) is disordered. Over residues 751 to 767 (ARHAHAPRRLPHSHARR) the composition is skewed to basic residues.

Belongs to the GlnD family. The cofactor is Mg(2+).

It catalyses the reaction [protein-PII]-L-tyrosine + UTP = [protein-PII]-uridylyl-L-tyrosine + diphosphate. The enzyme catalyses [protein-PII]-uridylyl-L-tyrosine + H2O = [protein-PII]-L-tyrosine + UMP + H(+). Uridylyltransferase (UTase) activity is inhibited by glutamine, while glutamine activates uridylyl-removing (UR) activity. Modifies, by uridylylation and deuridylylation, the PII regulatory proteins (GlnB and homologs), in response to the nitrogen status of the cell that GlnD senses through the glutamine level. Under low glutamine levels, catalyzes the conversion of the PII proteins and UTP to PII-UMP and PPi, while under higher glutamine levels, GlnD hydrolyzes PII-UMP to PII and UMP (deuridylylation). Thus, controls uridylylation state and activity of the PII proteins, and plays an important role in the regulation of nitrogen assimilation and metabolism. This Bordetella pertussis (strain Tohama I / ATCC BAA-589 / NCTC 13251) protein is Bifunctional uridylyltransferase/uridylyl-removing enzyme.